Reading from the N-terminus, the 248-residue chain is 4-hydroxy-tetrahydrodipicolinate reductase (248 aa).

Residues Asp-32, 74-76 (GTT), and 99-102 (SANF) contribute to the NAD(+) site. His-134 functions as the Proton donor/acceptor in the catalytic mechanism. His-135 contributes to the (S)-2,3,4,5-tetrahydrodipicolinate binding site. Lys-138 serves as the catalytic Proton donor. 144-145 (GT) lines the (S)-2,3,4,5-tetrahydrodipicolinate pocket.

This sequence belongs to the DapB family.

It is found in the cytoplasm. It carries out the reaction (S)-2,3,4,5-tetrahydrodipicolinate + NAD(+) + H2O = (2S,4S)-4-hydroxy-2,3,4,5-tetrahydrodipicolinate + NADH + H(+). The catalysed reaction is (S)-2,3,4,5-tetrahydrodipicolinate + NADP(+) + H2O = (2S,4S)-4-hydroxy-2,3,4,5-tetrahydrodipicolinate + NADPH + H(+). The protein operates within amino-acid biosynthesis; L-lysine biosynthesis via DAP pathway; (S)-tetrahydrodipicolinate from L-aspartate: step 4/4. Functionally, catalyzes the conversion of 4-hydroxy-tetrahydrodipicolinate (HTPA) to tetrahydrodipicolinate. The chain is 4-hydroxy-tetrahydrodipicolinate reductase from Chlorobium limicola (strain DSM 245 / NBRC 103803 / 6330).